The sequence spans 117 residues: Probable non-functional immunoglobulin heavy variable 7-81 (117 aa).

The first 19 residues, methionine 1–serine 19, serve as a signal peptide directing secretion. Positions glutamine 20–serine 44 are framework-1. One can recognise an Ig-like domain in the interval glutamine 20–arginine 117. A disulfide bridge links cysteine 41 with cysteine 115. The tract at residues glycine 45–glycine 52 is complementarity-determining-1. The tract at residues methionine 53–tryptophan 69 is framework-2. Residues phenylalanine 70–proline 77 form a complementarity-determining-2 region. N-linked (GlcNAc...) asparagine glycosylation is present at asparagine 76. Residues threonine 78 to cysteine 115 are framework-3. Residues alanine 116–arginine 117 form a complementarity-determining-3 region.

In terms of assembly, immunoglobulins are composed of two identical heavy chains and two identical light chains; disulfide-linked.

It is found in the secreted. The protein resides in the cell membrane. Probable non-functional open reading frame (ORF) of V region of the variable domain of immunoglobulin heavy chains. Non-functional ORF generally cannot participate in the synthesis of a productive immunoglobulin chain due to altered V-(D)-J or switch recombination and/or splicing site (at mRNA level) and/or conserved amino acid change (protein level). Immunoglobulins, also known as antibodies, are membrane-bound or secreted glycoproteins produced by B lymphocytes. In the recognition phase of humoral immunity, the membrane-bound immunoglobulins serve as receptors which, upon binding of a specific antigen, trigger the clonal expansion and differentiation of B lymphocytes into immunoglobulins-secreting plasma cells. Secreted immunoglobulins mediate the effector phase of humoral immunity, which results in the elimination of bound antigens. The antigen binding site is formed by the variable domain of one heavy chain, together with that of its associated light chain. Thus, each immunoglobulin has two antigen binding sites with remarkable affinity for a particular antigen. The variable domains are assembled by a process called V-(D)-J rearrangement and can then be subjected to somatic hypermutations which, after exposure to antigen and selection, allow affinity maturation for a particular antigen. This Homo sapiens (Human) protein is Probable non-functional immunoglobulin heavy variable 7-81.